The chain runs to 250 residues: Small ribosomal subunit protein uS3 (250 aa).

A KH type-2 domain is found at 39-107; sequence VREFLTKKLK…PAQVSINEID (69 aa). The tract at residues 215 to 250 is disordered; it reads MNPAPAEERPAKRGRGRGEGQERRGRRGDRAADKGE. The segment covering 220–250 has biased composition (basic and acidic residues); the sequence is AEERPAKRGRGRGEGQERRGRRGDRAADKGE.

It belongs to the universal ribosomal protein uS3 family. In terms of assembly, part of the 30S ribosomal subunit. Forms a tight complex with proteins S10 and S14.

Its function is as follows. Binds the lower part of the 30S subunit head. Binds mRNA in the 70S ribosome, positioning it for translation. This Acinetobacter baumannii (strain SDF) protein is Small ribosomal subunit protein uS3.